Here is a 273-residue protein sequence, read N- to C-terminus: MTKLIIHLVSDSSVQTAKYAANSALAQFTSVKPKLYHWPMIRNLELLNEVLSKIESKHGIVLYTIADQELRKALTKFCYELKIPCISVIGKIIKEMSVFSCIEIEKEQNYNYKFDKTYFDTLNAIDYAIRHDDGQMLNELSEADIILIGPSRTSKTPTSVFLAYNGLKAANIPYVYNCPSPDFIEKDIDQLVVGLVINPNRLIEIREARLNLLQINDNKSYTDFNIVQKECLEVRKICDQKNWPVIDVSTRSIEETAALIMRIYYNRKNKYNK.

Residue 149–156 coordinates ADP; sequence GPSRTSKT.

The protein belongs to the pyruvate, phosphate/water dikinase regulatory protein family. PDRP subfamily.

It carries out the reaction N(tele)-phospho-L-histidyl/L-threonyl-[pyruvate, phosphate dikinase] + ADP = N(tele)-phospho-L-histidyl/O-phospho-L-threonyl-[pyruvate, phosphate dikinase] + AMP + H(+). The catalysed reaction is N(tele)-phospho-L-histidyl/O-phospho-L-threonyl-[pyruvate, phosphate dikinase] + phosphate + H(+) = N(tele)-phospho-L-histidyl/L-threonyl-[pyruvate, phosphate dikinase] + diphosphate. Functionally, bifunctional serine/threonine kinase and phosphorylase involved in the regulation of the pyruvate, phosphate dikinase (PPDK) by catalyzing its phosphorylation/dephosphorylation. The chain is Putative pyruvate, phosphate dikinase regulatory protein from Rickettsia akari (strain Hartford).